Here is a 609-residue protein sequence, read N- to C-terminus: MPDDFNLKSFLADLPHLPGVYRHLDAAGEAMYVGKARDLKKRVSSYFQKNLASPRIAQMVAKVASVDVTVTRSEAEALLLENNLIKSLRPRYNILFRDDKSYPYLLITGHAWPRIAYYRGATSKRGQYFGPYPNSWAVRETIQILQKVFRLRTCEDTVFANRSRPCLLHQIGRCSAPCVGVIEAEDYAHDVQRAVRFLNGEAREVMDEIEARMLQASTELRFEEAAVLRDQMGSLSKVLHQQTMENVGGDDTDVIAVASAGGKICVNLAMVRGGRHLGDKPFFPTHAEGEQPAQVLEAFVAQHYADGAMPPVLVCSHALPDSGLVGLLAEQGGTRVARVLTRPQGVRRSWLEQAQKNAEMALARALTESGARAGRTLALAEALDLDTDEESLDALRIECFDISHTAGEATQASCVVFLHHDMQPSLYRRYNIVGITPGDDYAAMRQVLTRRFGKVTDGEAPMPGLVLIDGGKGQVEVARQVFVELGLDIQSLVGVAKGEGRKVGLETLVFADGRPPVALGKESAALMLIAQVRDEAHRFAITGMRARRAKTRNVSRLEEIEGIGARRRQRLLARFGGLSGVSSASIEDLASVEGISQELAVRIYDALHG.

A GIY-YIG domain is found at 16–94 (HLPGVYRHLD…IKSLRPRYNI (79 aa)). Positions 203–238 (REVMDEIEARMLQASTELRFEEAAVLRDQMGSLSKV) constitute a UVR domain.

The protein belongs to the UvrC family. Interacts with UvrB in an incision complex.

The protein resides in the cytoplasm. In terms of biological role, the UvrABC repair system catalyzes the recognition and processing of DNA lesions. UvrC both incises the 5' and 3' sides of the lesion. The N-terminal half is responsible for the 3' incision and the C-terminal half is responsible for the 5' incision. The sequence is that of UvrABC system protein C from Bordetella pertussis (strain Tohama I / ATCC BAA-589 / NCTC 13251).